The sequence spans 184 residues: Crossover junction endodeoxyribonuclease RuvC (184 aa).

Active-site residues include Asp11, Glu73, and Asp147. The Mg(2+) site is built by Asp11, Glu73, and Asp147.

Belongs to the RuvC family. As to quaternary structure, homodimer which binds Holliday junction (HJ) DNA. The HJ becomes 2-fold symmetrical on binding to RuvC with unstacked arms; it has a different conformation from HJ DNA in complex with RuvA. In the full resolvosome a probable DNA-RuvA(4)-RuvB(12)-RuvC(2) complex forms which resolves the HJ. It depends on Mg(2+) as a cofactor.

It localises to the cytoplasm. It catalyses the reaction Endonucleolytic cleavage at a junction such as a reciprocal single-stranded crossover between two homologous DNA duplexes (Holliday junction).. In terms of biological role, the RuvA-RuvB-RuvC complex processes Holliday junction (HJ) DNA during genetic recombination and DNA repair. Endonuclease that resolves HJ intermediates. Cleaves cruciform DNA by making single-stranded nicks across the HJ at symmetrical positions within the homologous arms, yielding a 5'-phosphate and a 3'-hydroxyl group; requires a central core of homology in the junction. The consensus cleavage sequence is 5'-(A/T)TT(C/G)-3'. Cleavage occurs on the 3'-side of the TT dinucleotide at the point of strand exchange. HJ branch migration catalyzed by RuvA-RuvB allows RuvC to scan DNA until it finds its consensus sequence, where it cleaves and resolves the cruciform DNA. The sequence is that of Crossover junction endodeoxyribonuclease RuvC from Neisseria gonorrhoeae (strain ATCC 700825 / FA 1090).